Consider the following 632-residue polypeptide: Biosynthetic arginine decarboxylase (632 aa).

N6-(pyridoxal phosphate)lysine is present on lysine 101. 281–291 (FDVGGGLGVDY) contributes to the substrate binding site.

It belongs to the Orn/Lys/Arg decarboxylase class-II family. SpeA subfamily. Requires Mg(2+) as cofactor. It depends on pyridoxal 5'-phosphate as a cofactor.

It carries out the reaction L-arginine + H(+) = agmatine + CO2. It functions in the pathway amine and polyamine biosynthesis; agmatine biosynthesis; agmatine from L-arginine: step 1/1. In terms of biological role, catalyzes the biosynthesis of agmatine from arginine. This is Biosynthetic arginine decarboxylase from Klebsiella pneumoniae (strain 342).